We begin with the raw amino-acid sequence, 261 residues long: Thiamine thiazole synthase (261 aa).

Residues A33, 52–53 (ER), G60, V124, and 152–154 (HVD) contribute to the NAD(+) site. Residues D154 and H169 each coordinate Fe cation. I219 is an NAD(+) binding site. R229 provides a ligand contact to glycine.

It belongs to the THI4 family. In terms of assembly, homooctamer; tetramer of dimers. It depends on Fe(2+) as a cofactor.

The enzyme catalyses hydrogen sulfide + glycine + NAD(+) = ADP-5-ethyl-4-methylthiazole-2-carboxylate + nicotinamide + 3 H2O + H(+). It participates in cofactor biosynthesis; thiamine diphosphate biosynthesis. In terms of biological role, involved in the biosynthesis of the thiazole moiety of thiamine. Catalyzes the conversion of NAD and glycine to adenosine diphosphate 5-(2-hydroxyethyl)-4-methylthiazole-2-carboxylate (ADT), an adenylated thiazole intermediate, using free sulfide as a source of sulfur. The protein is Thiamine thiazole synthase of Pyrobaculum calidifontis (strain DSM 21063 / JCM 11548 / VA1).